The chain runs to 1318 residues: DNA-directed RNA polymerase subunit beta' (1318 aa).

Residues C60, C62, C75, and C78 each coordinate Zn(2+). D535, D537, and D539 together coordinate Mg(2+). Residues C890, C967, C974, and C977 each contribute to the Zn(2+) site.

Belongs to the RNA polymerase beta' chain family. The RNAP catalytic core consists of 2 alpha, 1 beta, 1 beta' and 1 omega subunit. When a sigma factor is associated with the core the holoenzyme is formed, which can initiate transcription. Mg(2+) serves as cofactor. Zn(2+) is required as a cofactor.

The enzyme catalyses RNA(n) + a ribonucleoside 5'-triphosphate = RNA(n+1) + diphosphate. In terms of biological role, DNA-dependent RNA polymerase catalyzes the transcription of DNA into RNA using the four ribonucleoside triphosphates as substrates. The protein is DNA-directed RNA polymerase subunit beta' of Rhodococcus jostii (strain RHA1).